Consider the following 357-residue polypeptide: Norreticuline-7-O-methyltransferase (357 aa).

Position 225 (D225) interacts with S-adenosyl-L-methionine. The Proton acceptor role is filled by H263.

Belongs to the class I-like SAM-binding methyltransferase superfamily. Cation-independent O-methyltransferase family. As to expression, expressed instems, leaves, roots and seedlings.

In terms of biological role, involved in the biosynthesis of benzylisoquinoline alkaloids. Catalyzes specifically the methylation of norreticuline at position seven to produce norlaudanine. No activity with norcoclaurine, reticuline, norlaudanosoline, norisoorientaline, scoulerine, salutaridinol, oripavine, salsolinol, codeine or morphine. Involved in papaverine biosynthesis. The protein is Norreticuline-7-O-methyltransferase of Papaver somniferum (Opium poppy).